Consider the following 38-residue polypeptide: Cytochrome b6-f complex subunit 5 (38 aa).

A helical transmembrane segment spans residues 5-25; that stretch reads LLSGIVLGSIPITLAGSFVTA.

The protein belongs to the PetG family. The 4 large subunits of the cytochrome b6-f complex are cytochrome b6, subunit IV (17 kDa polypeptide, PetD), cytochrome f and the Rieske protein, while the 4 small subunits are PetG, PetL, PetM and PetN. The complex functions as a dimer.

It is found in the plastid. It localises to the chloroplast thylakoid membrane. Functionally, component of the cytochrome b6-f complex, which mediates electron transfer between photosystem II (PSII) and photosystem I (PSI), cyclic electron flow around PSI, and state transitions. PetG is required for either the stability or assembly of the cytochrome b6-f complex. This Huperzia lucidula (Shining clubmoss) protein is Cytochrome b6-f complex subunit 5.